Here is a 569-residue protein sequence, read N- to C-terminus: Peroxynitrite isomerase THAP4 (569 aa).

A THAP-type zinc finger spans residues 1-85; that stretch reads MVICCAAVNC…LKPTAVPSIF (85 aa). The segment at 88–216 is disordered; sequence SEKKRGAGGH…DKSGISMDDF (129 aa). Polar residues-rich tracts occupy residues 121-130 and 157-167; these read IGSSLSSSDN and AVSQEQGQSLE. Position 159 is a phosphoserine (serine 159). The HCFC1-binding motif (HBM) signature appears at 230–233; the sequence is LHSY. Phosphoserine is present on serine 234. Positions 235–312 are disordered; sequence FSSKHTRERP…EAVQSEHSDA (78 aa). Residues 242–262 show a composition bias toward basic and acidic residues; it reads ERPSVPREPMDRKRLKREMEP. Residues 265-279 are compositionally biased toward polar residues; the sequence is SGNSVAQSPPSSSLT. Residues 280–289 are compositionally biased toward low complexity; the sequence is ATPQKASQSP. The tract at residues 407 to 569 is nitrobindin; the sequence is PPKLNPVVEP…LHITYKKVTP (163 aa). Heme b contacts are provided by threonine 436 and histidine 559.

In the C-terminal section; belongs to the nitrobindin family. As to quaternary structure, homodimer. Heme b serves as cofactor.

It is found in the cytoplasm. The protein localises to the nucleus. The catalysed reaction is peroxynitrite = nitrate. The protein operates within nitrogen metabolism. Heme-binding protein able to scavenge peroxynitrite and to protect free L-tyrosine against peroxynitrite-mediated nitration, by acting as a peroxynitrite isomerase that converts peroxynitrite to nitrate. Therefore, this protein likely plays a role in peroxynitrite sensing and in the detoxification of reactive nitrogen and oxygen species (RNS and ROS, respectively). Is able to bind nitric oxide (NO) in vitro, but may act as a sensor of peroxynitrite levels in vivo, possibly modulating the transcriptional activity residing in the N-terminal region. This Mus musculus (Mouse) protein is Peroxynitrite isomerase THAP4.